The following is a 254-amino-acid chain: tRNA uridine(34) hydroxylase (254 aa).

The region spanning 123–217 (QDPNVILLDT…YLESIPEGES (95 aa)) is the Rhodanese domain. Residue Cys-177 is the Cysteine persulfide intermediate of the active site.

The protein belongs to the TrhO family.

The enzyme catalyses uridine(34) in tRNA + AH2 + O2 = 5-hydroxyuridine(34) in tRNA + A + H2O. Catalyzes oxygen-dependent 5-hydroxyuridine (ho5U) modification at position 34 in tRNAs. The sequence is that of tRNA uridine(34) hydroxylase from Legionella pneumophila (strain Lens).